A 468-amino-acid chain; its full sequence is Tubulin gamma chain (468 aa).

Residue 142–148 participates in GTP binding; sequence AGGTGSG.

Belongs to the tubulin family.

It localises to the cytoplasm. Its subcellular location is the cytoskeleton. It is found in the microtubule organizing center. Tubulin is the major constituent of microtubules. The gamma chain is found at microtubule organizing centers (MTOC) such as the spindle poles, suggesting that it is involved in the minus-end nucleation of microtubule assembly. This chain is Tubulin gamma chain (TUBG), found in Chlamydomonas reinhardtii (Chlamydomonas smithii).